Here is a 320-residue protein sequence, read N- to C-terminus: Protein phosphatase PTC7 homolog fig (320 aa).

The region spanning 49–315 (PYLVTAVQGR…DDITLILASV (267 aa)) is the PPM-type phosphatase domain. Mn(2+) is bound by residues Asp-93, Gly-94, and Asp-238.

It belongs to the PP2C family. Mg(2+) serves as cofactor. Requires Mn(2+) as cofactor.

The enzyme catalyses O-phospho-L-seryl-[protein] + H2O = L-seryl-[protein] + phosphate. It catalyses the reaction O-phospho-L-threonyl-[protein] + H2O = L-threonyl-[protein] + phosphate. The sequence is that of Protein phosphatase PTC7 homolog fig from Drosophila yakuba (Fruit fly).